Reading from the N-terminus, the 712-residue chain is Polyribonucleotide nucleotidyltransferase (712 aa).

Mg(2+) is bound by residues Asp487 and Asp493. A KH domain is found at 554–613 (PKIITMTINPDKIRDVIGPSGKQINKIIEETGVKIDIEQDGTVFISSINQEMNDKAKKII). Residues 623–691 (GEIYEGKVKR…KQGRVNLSRK (69 aa)) form the S1 motif domain.

The protein belongs to the polyribonucleotide nucleotidyltransferase family. Requires Mg(2+) as cofactor.

It is found in the cytoplasm. It carries out the reaction RNA(n+1) + phosphate = RNA(n) + a ribonucleoside 5'-diphosphate. Its function is as follows. Involved in mRNA degradation. Catalyzes the phosphorolysis of single-stranded polyribonucleotides processively in the 3'- to 5'-direction. The polypeptide is Polyribonucleotide nucleotidyltransferase (Bacillus cereus (strain 03BB102)).